The primary structure comprises 117 residues: Large ribosomal subunit protein bL20 (117 aa).

This sequence belongs to the bacterial ribosomal protein bL20 family.

In terms of biological role, binds directly to 23S ribosomal RNA and is necessary for the in vitro assembly process of the 50S ribosomal subunit. It is not involved in the protein synthesizing functions of that subunit. This chain is Large ribosomal subunit protein bL20, found in Streptococcus suis (strain 05ZYH33).